The following is a 508-amino-acid chain: MKYLNLVFVLQLLISIKYASFGRAFSLFEDDTTFANLDKQLKLPQNTQQTLKLDRLNHDDPLFTTFISSVDTDYSLRLRTVDPSKLGIDTVKQWSGYMDYKDSKHFFYWFFESRNDPANDPIILWLNGGPGCSSFTGLLFELGPSSIGADMKPIHNPYSWNNNASMIFLEQPLGVGFSYGDEKVSSTKLAGKDAYIFLELFFEAFPHLRSNDFHIAGESYAGHYIPQIAHEIVVKNPERTFNLTSVMIGNGITDPLIQADYYEPMACGKGGYHPVLSSEECEKMSKAAGRCRRLNKLCYASKSSLPCIVATAYCDSALLEPYINTGLNVYDIRGPCEDNSTDGMCYTGLRYVDQYMNFPEVQETLGSDVHNYSGCDNDVFTGFLFTGDGSKPFQQYIAELLNHNIPVLIYAGDKDYICNWLGNHAWSNELEWINKRRYQRRMLRPWVSKETGEELGQVKNYGPFTFLRIYDAGHMVPYDQPEASLEMVNSWISGNRAFSDLSTLENAS.

Positions 1–24 are cleaved as a signal peptide; it reads MKYLNLVFVLQLLISIKYASFGRA. Cystine bridges form between C132-C375, C267-C281, C291-C314, C298-C307, and C336-C345. The N-linked (GlcNAc...) asparagine glycan is linked to N163. S219 is an active-site residue. N242 carries N-linked (GlcNAc...) asparagine glycosylation. N339 and N371 each carry an N-linked (GlcNAc...) asparagine glycan. The active site involves D415. Position 418 (C418) interacts with substrate. The active site involves H474. Residue M475 coordinates substrate.

This sequence belongs to the peptidase S10 family.

The protein resides in the vacuole lumen. The enzyme catalyses Release of a C-terminal amino acid with broad specificity.. Functionally, vacuolar serine-type carboxypeptidase involved in vacuolar zymogen activation, breakdown of the autophagic body, and autophagosome-dependent protein synthesis. Plays a key role in phytochelatin (PC) synthesis from glutathione (GSH) by cleaving the Gly from GSH and form the PC-peptides of the structure (gamma-Glu-Cys)2-Gly. Also involved in resistance to xenobiotics via the degradation of glutathione-S-conjugates. The polypeptide is Vacuolar serine-type carboxypeptidase ATG42 (Saccharomyces cerevisiae (strain ATCC 204508 / S288c) (Baker's yeast)).